Here is an 862-residue protein sequence, read N- to C-terminus: Leucine--tRNA ligase (862 aa).

Residues 51–61 carry the 'HIGH' region motif; it reads PYPSGSLHMGH. Residues 624-628 carry the 'KMSKS' region motif; that stretch reads KMSKS. Residue Lys627 participates in ATP binding.

It belongs to the class-I aminoacyl-tRNA synthetase family.

It localises to the cytoplasm. It carries out the reaction tRNA(Leu) + L-leucine + ATP = L-leucyl-tRNA(Leu) + AMP + diphosphate. The protein is Leucine--tRNA ligase of Prochlorococcus marinus (strain NATL2A).